The sequence spans 575 residues: Dihydroxy-acid dehydratase (575 aa).

Positions 1-25 are disordered; it reads MPTTDSARAADIKQPDIKPRSRDVT. Residues 8–25 are compositionally biased toward basic and acidic residues; the sequence is RAADIKQPDIKPRSRDVT. Cys-64 is a [2Fe-2S] cluster binding site. Asp-96 is a binding site for Mg(2+). Residue Cys-137 coordinates [2Fe-2S] cluster. Asp-138 and Lys-139 together coordinate Mg(2+). The residue at position 139 (Lys-139) is an N6-carboxylysine. Position 214 (Cys-214) interacts with [2Fe-2S] cluster. Residue Glu-465 participates in Mg(2+) binding. The active-site Proton acceptor is the Ser-491.

This sequence belongs to the IlvD/Edd family. Homodimer. It depends on [2Fe-2S] cluster as a cofactor. The cofactor is Mg(2+).

It carries out the reaction (2R)-2,3-dihydroxy-3-methylbutanoate = 3-methyl-2-oxobutanoate + H2O. The enzyme catalyses (2R,3R)-2,3-dihydroxy-3-methylpentanoate = (S)-3-methyl-2-oxopentanoate + H2O. The protein operates within amino-acid biosynthesis; L-isoleucine biosynthesis; L-isoleucine from 2-oxobutanoate: step 3/4. It functions in the pathway amino-acid biosynthesis; L-valine biosynthesis; L-valine from pyruvate: step 3/4. In terms of biological role, functions in the biosynthesis of branched-chain amino acids. Catalyzes the dehydration of (2R,3R)-2,3-dihydroxy-3-methylpentanoate (2,3-dihydroxy-3-methylvalerate) into 2-oxo-3-methylpentanoate (2-oxo-3-methylvalerate) and of (2R)-2,3-dihydroxy-3-methylbutanoate (2,3-dihydroxyisovalerate) into 2-oxo-3-methylbutanoate (2-oxoisovalerate), the penultimate precursor to L-isoleucine and L-valine, respectively. The chain is Dihydroxy-acid dehydratase from Mycobacterium avium (strain 104).